A 171-amino-acid polypeptide reads, in one-letter code: Putative adenylate kinase (171 aa).

Gly-9, Gly-11, Lys-12, Thr-13, and Thr-14 together coordinate ATP. The tract at residues 28–51 (SLGELIRQKGFVLGRDPIRGYLEA) is NMP. The segment at 99-109 (GRGYPEGKVLE) is LID. Arg-100 is a binding site for ATP.

The protein belongs to the adenylate kinase family. AK6 subfamily. As to quaternary structure, interacts with uS11. Not a structural component of 40S pre-ribosomes, but transiently interacts with them by binding to uS11.

The enzyme catalyses AMP + ATP = 2 ADP. It carries out the reaction ATP + H2O = ADP + phosphate + H(+). Broad-specificity nucleoside monophosphate (NMP) kinase that catalyzes the reversible transfer of the terminal phosphate group between nucleoside triphosphates and monophosphates. Also has ATPase activity. Involved in the late maturation steps of the 30S ribosomal particles, specifically 16S rRNA maturation. While NMP activity is not required for ribosome maturation, ATPase activity is. Associates transiently with small ribosomal subunit protein uS11. ATP hydrolysis breaks the interaction with uS11. May temporarily remove uS11 from the ribosome to enable a conformational change of the ribosomal RNA that is needed for the final maturation step of the small ribosomal subunit. The chain is Putative adenylate kinase from Methanothermobacter thermautotrophicus (strain ATCC 29096 / DSM 1053 / JCM 10044 / NBRC 100330 / Delta H) (Methanobacterium thermoautotrophicum).